Here is a 112-residue protein sequence, read N- to C-terminus: Nitrogen regulatory protein P-II (112 aa).

At Tyr51 the chain carries O-UMP-tyrosine.

It belongs to the P(II) protein family. Homotrimer.

P-II indirectly controls the transcription of the glutamine synthetase gene (glnA). P-II prevents NR-II-catalyzed conversion of NR-I to NR-I-phosphate, the transcriptional activator of glnA. When P-II is uridylylated to P-II-UMP, these events are reversed. When the ratio of Gln to 2-ketoglutarate decreases, P-II is uridylylated to P-II-UMP, which causes the deadenylation of glutamine synthetase, so activating the enzyme. The protein is Nitrogen regulatory protein P-II (glnB) of Rhodospirillum rubrum (strain ATCC 11170 / ATH 1.1.1 / DSM 467 / LMG 4362 / NCIMB 8255 / S1).